The chain runs to 139 residues: D-ribose pyranase (139 aa).

His20 functions as the Proton donor in the catalytic mechanism. Substrate contacts are provided by residues Asp28, His106, and 128–130; that span reads YAN.

Belongs to the RbsD / FucU family. RbsD subfamily. Homodecamer.

It localises to the cytoplasm. It catalyses the reaction beta-D-ribopyranose = beta-D-ribofuranose. It participates in carbohydrate metabolism; D-ribose degradation; D-ribose 5-phosphate from beta-D-ribopyranose: step 1/2. In terms of biological role, catalyzes the interconversion of beta-pyran and beta-furan forms of D-ribose. The polypeptide is D-ribose pyranase (Pectobacterium carotovorum subsp. carotovorum (strain PC1)).